The following is a 203-amino-acid chain: FMN-dependent NADH:quinone oxidoreductase (203 aa).

FMN contacts are provided by residues Ser9 and 15–17 (SKS).

It belongs to the azoreductase type 1 family. In terms of assembly, homodimer. FMN is required as a cofactor.

The catalysed reaction is 2 a quinone + NADH + H(+) = 2 a 1,4-benzosemiquinone + NAD(+). The enzyme catalyses N,N-dimethyl-1,4-phenylenediamine + anthranilate + 2 NAD(+) = 2-(4-dimethylaminophenyl)diazenylbenzoate + 2 NADH + 2 H(+). Functionally, quinone reductase that provides resistance to thiol-specific stress caused by electrophilic quinones. In terms of biological role, also exhibits azoreductase activity. Catalyzes the reductive cleavage of the azo bond in aromatic azo compounds to the corresponding amines. This Bordetella avium (strain 197N) protein is FMN-dependent NADH:quinone oxidoreductase.